Consider the following 393-residue polypeptide: Chalcone synthase (393 aa).

C164 is an active-site residue.

Belongs to the thiolase-like superfamily. Chalcone/stilbene synthases family.

It carries out the reaction (E)-4-coumaroyl-CoA + 3 malonyl-CoA + 3 H(+) = 2',4,4',6'-tetrahydroxychalcone + 3 CO2 + 4 CoA. It participates in secondary metabolite biosynthesis; flavonoid biosynthesis. In terms of biological role, the primary product of this enzyme is 4,2',4',6'-tetrahydroxychalcone (also termed naringenin-chalcone or chalcone) which can under specific conditions spontaneously isomerize into naringenin. The chain is Chalcone synthase (CHS) from Vitis vinifera (Grape).